Reading from the N-terminus, the 327-residue chain is Cobalamin biosynthesis protein CobD (327 aa).

Helical transmembrane passes span 63 to 83 (VGIL…ARLF), 84 to 104 (DVLG…FLAQ), 158 to 178 (FSDG…PGLL), and 305 to 325 (VFYA…LPLL).

It belongs to the CobD/CbiB family.

Its subcellular location is the cell membrane. Its pathway is cofactor biosynthesis; adenosylcobalamin biosynthesis. In terms of biological role, converts cobyric acid to cobinamide by the addition of aminopropanol on the F carboxylic group. The protein is Cobalamin biosynthesis protein CobD of Rhizobium meliloti (strain 1021) (Ensifer meliloti).